Consider the following 692-residue polypeptide: Mitogen-activated protein kinase kinase kinase 7-interacting protein 3 homolog (692 aa).

Positions 8–51 (LDIQVLNDLQQRFPEIPRDVVSQCMLQNNSNLDACYRALTQESC) constitute a CUE domain. Disordered regions lie at residues 138-159 (NDQN…GVGT), 206-333 (YGTP…PYGP), and 349-427 (SQQR…VVMS). Composition is skewed to polar residues over residues 215 to 230 (PSQN…NTAW), 249 to 298 (QSFQ…QTSH), and 349 to 387 (SQQR…SGSP). Residues 409–422 (SQPPTTTGSPTPSS) are compositionally biased toward low complexity. Positions 496 to 580 (ALLLHQRARM…QKEIDLLQSR (85 aa)) form a coiled coil. The interval 598 to 662 (SPGPAVPPNT…SPRPGRDEDF (65 aa)) is disordered. The segment covering 608 to 620 (CKKESSETTSGER) has biased composition (basic and acidic residues). The RanBP2-type zinc finger occupies 662–692 (FEGSPWNCNSCTFLNHPALNRCEQCEMPRFT).

May play a role in signaling pathway. This Xenopus laevis (African clawed frog) protein is Mitogen-activated protein kinase kinase kinase 7-interacting protein 3 homolog (map3k7ip3).